Consider the following 169-residue polypeptide: S-ribosylhomocysteine lyase (169 aa).

Residues His54, His58, and Cys128 each coordinate Fe cation.

Belongs to the LuxS family. In terms of assembly, homodimer. The cofactor is Fe cation.

The enzyme catalyses S-(5-deoxy-D-ribos-5-yl)-L-homocysteine = (S)-4,5-dihydroxypentane-2,3-dione + L-homocysteine. Involved in the synthesis of autoinducer 2 (AI-2) which is secreted by bacteria and is used to communicate both the cell density and the metabolic potential of the environment. The regulation of gene expression in response to changes in cell density is called quorum sensing. Catalyzes the transformation of S-ribosylhomocysteine (RHC) to homocysteine (HC) and 4,5-dihydroxy-2,3-pentadione (DPD). This chain is S-ribosylhomocysteine lyase, found in Psychromonas ingrahamii (strain DSM 17664 / CCUG 51855 / 37).